The following is a 538-amino-acid chain: Beta-1,4-mannosyl-glycoprotein 4-beta-N-acetylglucosaminyltransferase (538 aa).

Over 1–7 (MKMRRYK) the chain is Cytoplasmic. Residues 8 to 23 (LFLMFCMAGLCLISFL) traverse the membrane as a helical; Signal-anchor for type II membrane protein segment. Topologically, residues 24 to 538 (HFFKTLSYVT…VRGKLDTAEG (515 aa)) are lumenal. A disordered region spans residues 120 to 161 (PGTRMLEKPSPGRTEEKTEVSEGSSARGPARRPMRHVLSSRE). N-linked (GlcNAc...) asparagine glycans are attached at residues Asn245, Asn263, and Asn401. Positions 507 to 538 (REPKSTVEGGRQNQGSDGRSSAVRGKLDTAEG) are disordered.

This sequence belongs to the glycosyltransferase 17 family. As to quaternary structure, interacts with MGAT4D. As to expression, highly expressed in brain and kidney and to a much lesser extent in stomach, heart, intestine, uterus, testis, ovary and lung. Not present in spleen, liver and muscle. In brain, expressed in neurons of hippocampus.

It localises to the golgi apparatus membrane. The catalysed reaction is N(4)-{beta-D-GlcNAc-(1-&gt;2)-alpha-D-Man-(1-&gt;3)-[beta-D-GlcNAc-(1-&gt;2)-alpha-D-Man-(1-&gt;6)]-beta-D-Man-(1-&gt;4)-beta-D-GlcNAc-(1-&gt;4)-beta-D-GlcNAc}-L-asparaginyl-[protein] + UDP-N-acetyl-alpha-D-glucosamine = N(4)-{beta-D-GlcNAc-(1-&gt;2)-alpha-D-Man-(1-&gt;3)-[beta-D-GlcNAc-(1-&gt;4)]-[beta-D-GlcNAc-(1-&gt;2)-alpha-D-Man-(1-&gt;6)]-beta-D-Man-(1-&gt;4)-beta-D-GlcNAc-(1-&gt;4)-beta-D-GlcNAc}-L-asparaginyl-[protein] + UDP + H(+). It functions in the pathway protein modification; protein glycosylation. It is involved in the regulation of the biosynthesis and biological function of glycoprotein oligosaccharides. Catalyzes the addition of N-acetylglucosamine in beta 1-4 linkage to the beta-linked mannose of the trimannosyl core of N-linked sugar chains, called bisecting N-acetylglucosamine (GlcNAc). It is one of the most important enzymes involved in the regulation of the biosynthesis of glycoprotein oligosaccharides. The addition of this bisecting GlcNAc residue alters not only the composition, but also the conformation of the N-glycan. The introduction of the bisecting GlcNAc residue results in the suppression of further processing and elongation of N-glycans, precluding the formation of beta-1,6 GlcNAc branching, catalyzed by MGAT5 since it is unable to use the bisected oligosaccharide as a substrate. Addition of bisecting N-acetylglucosamine to CDH1/E-cadherin modulates CDH1 cell membrane location. Inhibits NeuAc-alpha-2,3-Gal-beta-1,4-GlcNAc- formation which modulates sialylation levels and plays a role in cell migration regulation. In brain, addition of bisecting N-acetylglucosamine to BACE1 blocks its lysosomal targeting in response to oxidative stress and further degradation which increases its location to early endosome and the APP cleavage. The chain is Beta-1,4-mannosyl-glycoprotein 4-beta-N-acetylglucosaminyltransferase from Mus musculus (Mouse).